Here is a 426-residue protein sequence, read N- to C-terminus: Crinkler effector protein 4 (426 aa).

The tract at residues Val-20–Lys-57 is LQLFLAK domain. The tract at residues Asp-59–Val-107 is DWL domain. An HVLVXXP motif motif is present at residues His-108–Pro-114. An effector domain region spans residues Glu-115–Ser-426.

The protein belongs to the Crinkler effector family.

It is found in the secreted. Its subcellular location is the host nucleus. Functionally, secreted effector that is critical to pathogenesis by suppressing plant immune responsess. Promotes Phytophthora infection by suppressing the H(2)O(2) accumulation and callose deposition. May induce cell death by regulating expression of cell death-related genes. The protein is Crinkler effector protein 4 of Phytophthora capsici.